The primary structure comprises 284 residues: Undecaprenyl-diphosphatase (284 aa).

The next 8 membrane-spanning stretches (helical) occupy residues 7–27 (IILGIIEGITEWLPISSTGHL), 44–64 (EMFDVVIQLGAILSVVVLYFH), 90–110 (LWLKVLIAALPAAIIGLPLND), 116–136 (FYHFVPVAFMLIIYGVAFIVI), 167–187 (VLSLLPGTSRSGATIVGALLI), 197–217 (FTFFLGIPVMFGASFIKILHF), 229–249 (FGVLLVACLVAFGVSMIAIKF), and 259–279 (FTFFGKYRIVLGIVLLIYAAF).

This sequence belongs to the UppP family.

It is found in the cell membrane. It carries out the reaction di-trans,octa-cis-undecaprenyl diphosphate + H2O = di-trans,octa-cis-undecaprenyl phosphate + phosphate + H(+). Functionally, catalyzes the dephosphorylation of undecaprenyl diphosphate (UPP). Confers resistance to bacitracin. This chain is Undecaprenyl-diphosphatase, found in Lactococcus lactis subsp. cremoris (strain SK11).